A 429-amino-acid polypeptide reads, in one-letter code: 3-phosphoshikimate 1-carboxyvinyltransferase (429 aa).

The 3-phosphoshikimate site is built by K11, S12, and R16. K11 is a phosphoenolpyruvate binding site. Phosphoenolpyruvate contacts are provided by G82 and R110. 3-phosphoshikimate-binding residues include S155, Q157, D302, and K329. A phosphoenolpyruvate-binding site is contributed by Q157. D302 functions as the Proton acceptor in the catalytic mechanism. Positions 333 and 385 each coordinate phosphoenolpyruvate.

This sequence belongs to the EPSP synthase family. As to quaternary structure, monomer.

The protein localises to the cytoplasm. The enzyme catalyses 3-phosphoshikimate + phosphoenolpyruvate = 5-O-(1-carboxyvinyl)-3-phosphoshikimate + phosphate. Its pathway is metabolic intermediate biosynthesis; chorismate biosynthesis; chorismate from D-erythrose 4-phosphate and phosphoenolpyruvate: step 6/7. In terms of biological role, catalyzes the transfer of the enolpyruvyl moiety of phosphoenolpyruvate (PEP) to the 5-hydroxyl of shikimate-3-phosphate (S3P) to produce enolpyruvyl shikimate-3-phosphate and inorganic phosphate. In Helicobacter pylori (strain ATCC 700392 / 26695) (Campylobacter pylori), this protein is 3-phosphoshikimate 1-carboxyvinyltransferase.